The following is a 314-amino-acid chain: tRNA dimethylallyltransferase (314 aa).

11–18 provides a ligand contact to ATP; the sequence is GPTAVGKT. Residue 13 to 18 coordinates substrate; sequence TAVGKT. An interaction with substrate tRNA region spans residues 36–39; that stretch reads DSMQ.

It belongs to the IPP transferase family. Monomer. It depends on Mg(2+) as a cofactor.

It catalyses the reaction adenosine(37) in tRNA + dimethylallyl diphosphate = N(6)-dimethylallyladenosine(37) in tRNA + diphosphate. Catalyzes the transfer of a dimethylallyl group onto the adenine at position 37 in tRNAs that read codons beginning with uridine, leading to the formation of N6-(dimethylallyl)adenosine (i(6)A). This is tRNA dimethylallyltransferase from Bacillus anthracis.